Consider the following 259-residue polypeptide: Probable UMP-CMP kinase 2 (259 aa).

ATP is bound at residue 63–68 (GSGKGT). The segment at 83-112 (SAGDLLRREIAMHTENGAMILNLIKDGKIV) is NMP. Residues R89, 110-112 (KIV), and 137-140 (GFPR) contribute to the a ribonucleoside 5'-phosphate site. A CMP-binding site is contributed by N144. The LID stretch occupies residues 175–183 (NRNQGRIDD). R176 is a binding site for ATP. A ribonucleoside 5'-phosphate is bound by residues R180 and R191. Position 219 (G219) interacts with ATP.

It belongs to the adenylate kinase family. UMP-CMP kinase subfamily. Monomer. Mg(2+) serves as cofactor.

It is found in the cytoplasm. Its subcellular location is the nucleus. It carries out the reaction CMP + ATP = CDP + ADP. The enzyme catalyses dCMP + ATP = dCDP + ADP. It catalyses the reaction UMP + ATP = UDP + ADP. Functionally, catalyzes the phosphorylation of pyrimidine nucleoside monophosphates at the expense of ATP. Plays an important role in de novo pyrimidine nucleotide biosynthesis. Has preference for UMP and CMP as phosphate acceptors. In Arabidopsis thaliana (Mouse-ear cress), this protein is Probable UMP-CMP kinase 2 (UMK2).